We begin with the raw amino-acid sequence, 274 residues long: ATP synthase subunit delta (274 aa).

This sequence belongs to the ATPase delta chain family. As to quaternary structure, F-type ATPases have 2 components, F(1) - the catalytic core - and F(0) - the membrane proton channel. F(1) has five subunits: alpha(3), beta(3), gamma(1), delta(1), epsilon(1). F(0) has three main subunits: a(1), b(2) and c(10-14). The alpha and beta chains form an alternating ring which encloses part of the gamma chain. F(1) is attached to F(0) by a central stalk formed by the gamma and epsilon chains, while a peripheral stalk is formed by the delta and b chains.

The protein localises to the cell membrane. F(1)F(0) ATP synthase produces ATP from ADP in the presence of a proton or sodium gradient. F-type ATPases consist of two structural domains, F(1) containing the extramembraneous catalytic core and F(0) containing the membrane proton channel, linked together by a central stalk and a peripheral stalk. During catalysis, ATP synthesis in the catalytic domain of F(1) is coupled via a rotary mechanism of the central stalk subunits to proton translocation. In terms of biological role, this protein is part of the stalk that links CF(0) to CF(1). It either transmits conformational changes from CF(0) to CF(1) or is implicated in proton conduction. The chain is ATP synthase subunit delta from Salinispora tropica (strain ATCC BAA-916 / DSM 44818 / JCM 13857 / NBRC 105044 / CNB-440).